We begin with the raw amino-acid sequence, 152 residues long: uncharacterized protein (152 aa).

It belongs to the transposase 8 family.

This is an uncharacterized protein from Sinorhizobium fredii (strain NBRC 101917 / NGR234).